We begin with the raw amino-acid sequence, 30 residues long: Trypsin inhibitor 3 (30 aa).

Intrachain disulfides connect Cys-4-Cys-21, Cys-11-Cys-23, and Cys-17-Cys-29.

Belongs to the protease inhibitor I7 (squash-type serine protease inhibitor) family.

It is found in the secreted. In terms of biological role, inhibits lysyl endopeptidase and trypsin. This Cucumis melo var. conomon (Oriental pickling melon) protein is Trypsin inhibitor 3.